The following is a 431-amino-acid chain: MTVKTEAARGPLTYSRMRGMVAILIAFMKQRRMGLNDFIQKIANNSYACKHTEVQSILKISQPQEPELMNANPSPPPSPSQQINLGPSSNPHAKPSDFHFLKVIGKGSFGKVLLARHKAEEAFYAVKVLQKKAILKKKEEKHIMSERNVLLKNVKHPFLVGLHFSFQTADKLYFVLDYINGGELFYHLQRERCFLEPRARFYAAEIASALGYLHSLNIVYRDLKPENILLDSQGHIVLTDFGLCKENIEHNGTTSTFCGTPEYLAPEVLHKQPYDRTVDWWCLGAVLYEMLYGLPPFYSRNTAEMYDNILNKPLQLKPNITNSARHLLEGLLQKDRTKRLGAKDDFMEIRNHVFFSLINWDDLINKKITPPFNPNVSGPSDLRHFDPEFTEEPVPSSIGRSPDSILITASVKEAAEAFLGFSYAPPMDSFL.

Residues 1-60 form a necessary for localization to the mitochondria region; the sequence is MTVKTEAARGPLTYSRMRGMVAILIAFMKQRRMGLNDFIQKIANNSYACKHTEVQSILKI. The interval 66-92 is disordered; the sequence is PELMNANPSPPPSPSQQINLGPSSNPH. A Phosphoserine modification is found at Ser74. Ser78 carries the post-translational modification Phosphoserine; by MAPK7. The span at 81–91 shows a compositional bias: polar residues; the sequence is QQINLGPSSNP. The region spanning 98–355 is the Protein kinase domain; it reads FHFLKVIGKG…FMEIRNHVFF (258 aa). Residues 104–112 and Lys127 each bind ATP; that span reads IGKGSFGKV. The Nuclear localization signal motif lies at 131–141; sequence KKAILKKKEEK. Catalysis depends on Asp222, which acts as the Proton acceptor. Residue Thr256 is modified to Phosphothreonine; by PDPK1. Positions 356 to 431 constitute an AGC-kinase C-terminal domain; the sequence is SLINWDDLIN…SYAPPMDSFL (76 aa). Thr369 bears the Phosphothreonine; by PKA mark. 3 positions are modified to phosphoserine: Ser397, Ser401, and Ser422.

The protein belongs to the protein kinase superfamily. AGC Ser/Thr protein kinase family. In terms of assembly, homodimer; disulfide-linked. Forms a trimeric complex with FBXW7 and NOTCH1. Interacts with MAPK3/ERK1, MAPK1/ERK2, MAP2K1/MEK1, MAP2K2/MEK2, NEDD4, NEDD4L, MAPT/TAU, MAPK7, CREB1, SLC9A3R2/NHERF2 and KCNJ1/ROMK1. Associates with the mammalian target of rapamycin complex 2 (mTORC2) via an interaction with MAPKAP1/SIN1. In terms of processing, regulated by phosphorylation. Activated by phosphorylation on Ser-422 by mTORC2, transforming it into a substrate for PDPK1 which phosphorylates it on Thr-256. Phosphorylation on Ser-397 and Ser-401 are also essential for its activity. Phosphorylation on Ser-78 by MAPK7 is required for growth factor-induced cell cycle progression. Post-translationally, ubiquitinated by NEDD4L; which promotes proteasomal degradation. Ubiquitinated by SYVN1 at the endoplasmic reticulum; which promotes rapid proteasomal degradation and maintains a high turnover rate in resting cells.

It localises to the cytoplasm. Its subcellular location is the nucleus. The protein resides in the endoplasmic reticulum membrane. It is found in the cell membrane. The protein localises to the mitochondrion. It catalyses the reaction L-seryl-[protein] + ATP = O-phospho-L-seryl-[protein] + ADP + H(+). The enzyme catalyses L-threonyl-[protein] + ATP = O-phospho-L-threonyl-[protein] + ADP + H(+). Two specific sites, one in the kinase domain (Thr-256) and the other in the C-terminal regulatory region (Ser-422), need to be phosphorylated for its full activation. Phosphorylation at Ser-397 and Ser-401 are also essential for its activity. Activated by WNK1, WNK2, WNK3 and WNK4; which promote phosphorylation by mTORC2. Its function is as follows. Serine/threonine-protein kinase which is involved in the regulation of a wide variety of ion channels, membrane transporters, cellular enzymes, transcription factors, neuronal excitability, cell growth, proliferation, survival, migration and apoptosis. Plays an important role in cellular stress response. Contributes to regulation of renal Na(+) retention, renal K(+) elimination, salt appetite, gastric acid secretion, intestinal Na(+)/H(+) exchange and nutrient transport, insulin-dependent salt sensitivity of blood pressure, salt sensitivity of peripheral glucose uptake, cardiac repolarization and memory consolidation. Up-regulates Na(+) channels: SCNN1A/ENAC, SCN5A and ASIC1/ACCN2, K(+) channels: KCNJ1/ROMK1, KCNA1-5, KCNQ1-5 and KCNE1, epithelial Ca(2+) channels: TRPV5 and TRPV6, chloride channels: BSND, CLCN2 and CFTR, glutamate transporters: SLC1A3/EAAT1, SLC1A2 /EAAT2, SLC1A1/EAAT3, SLC1A6/EAAT4 and SLC1A7/EAAT5, amino acid transporters: SLC1A5/ASCT2, SLC38A1/SN1 and SLC6A19, creatine transporter: SLC6A8, Na(+)/dicarboxylate cotransporter: SLC13A2/NADC1, Na(+)-dependent phosphate cotransporter: SLC34A2/NAPI-2B, glutamate receptor: GRIK2/GLUR6. Up-regulates carriers: SLC9A3/NHE3, SLC12A1/NKCC2, SLC12A3/NCC, SLC5A3/SMIT, SLC2A1/GLUT1, SLC5A1/SGLT1 and SLC15A2/PEPT2. Regulates enzymes: GSK3A/B, PMM2 and Na(+)/K(+) ATPase, and transcription factors: CTNNB1 and nuclear factor NF-kappa-B. Stimulates sodium transport into epithelial cells by enhancing the stability and expression of SCNN1A/ENAC. This is achieved by phosphorylating the NEDD4L ubiquitin E3 ligase, promoting its interaction with 14-3-3 proteins, thereby preventing it from binding to SCNN1A/ENAC and targeting it for degradation. Regulates store-operated Ca(+2) entry (SOCE) by stimulating ORAI1 and STIM1. Regulates KCNJ1/ROMK1 directly via its phosphorylation or indirectly via increased interaction with SLC9A3R2/NHERF2. Phosphorylates MDM2 and activates MDM2-dependent ubiquitination of p53/TP53. Phosphorylates MAPT/TAU and mediates microtubule depolymerization and neurite formation in hippocampal neurons. Phosphorylates SLC2A4/GLUT4 and up-regulates its activity. Phosphorylates APBB1/FE65 and promotes its localization to the nucleus. Phosphorylates MAPK1/ERK2 and activates it by enhancing its interaction with MAP2K1/MEK1 and MAP2K2/MEK2. Phosphorylates FBXW7 and plays an inhibitory role in the NOTCH1 signaling. Phosphorylates FOXO1 resulting in its relocalization from the nucleus to the cytoplasm. Phosphorylates FOXO3, promoting its exit from the nucleus and interference with FOXO3-dependent transcription. Phosphorylates BRAF and MAP3K3/MEKK3 and inhibits their activity. Phosphorylates SLC9A3/NHE3 in response to dexamethasone, resulting in its activation and increased localization at the cell membrane. Phosphorylates CREB1. Necessary for vascular remodeling during angiogenesis. The sequence is that of Serine/threonine-protein kinase Sgk1 (SGK1) from Oryctolagus cuniculus (Rabbit).